Reading from the N-terminus, the 224-residue chain is MTIDTRQLGRVDYLPTYQAMQDFTAARNEATPDALWICEHPAVYTQGLAGKIDHLLNPGEIPVVQTNRGGQVTFHGPGQVVVYPLIDLKRAGYFVKEYVYRIEESVIRTLAHFGVTGHRVAGSPGIYVRMDDPFSHAALSGPVHPSDPFRGLGKIAALGIKVSRHCTYHGVALNVAMDLEPFSRINPCGYAGLKTTDLSTIGVSASWQEAASVLGQKLATYLAP.

Positions 29–224 constitute a BPL/LPL catalytic domain; that stretch reads EATPDALWIC…GQKLATYLAP (196 aa). Substrate-binding positions include 68-75, 157-159, and 170-172; these read RGGQVTFH, ALG, and GVA. Cys188 functions as the Acyl-thioester intermediate in the catalytic mechanism.

It belongs to the LipB family.

It is found in the cytoplasm. The enzyme catalyses octanoyl-[ACP] + L-lysyl-[protein] = N(6)-octanoyl-L-lysyl-[protein] + holo-[ACP] + H(+). It functions in the pathway protein modification; protein lipoylation via endogenous pathway; protein N(6)-(lipoyl)lysine from octanoyl-[acyl-carrier-protein]: step 1/2. Functionally, catalyzes the transfer of endogenously produced octanoic acid from octanoyl-acyl-carrier-protein onto the lipoyl domains of lipoate-dependent enzymes. Lipoyl-ACP can also act as a substrate although octanoyl-ACP is likely to be the physiological substrate. This chain is Octanoyltransferase, found in Polaromonas naphthalenivorans (strain CJ2).